The primary structure comprises 188 residues: ATP synthase subunit delta (188 aa).

The protein belongs to the ATPase delta chain family. F-type ATPases have 2 components, F(1) - the catalytic core - and F(0) - the membrane proton channel. F(1) has five subunits: alpha(3), beta(3), gamma(1), delta(1), epsilon(1). F(0) has three main subunits: a(1), b(2) and c(10-14). The alpha and beta chains form an alternating ring which encloses part of the gamma chain. F(1) is attached to F(0) by a central stalk formed by the gamma and epsilon chains, while a peripheral stalk is formed by the delta and b chains.

The protein localises to the cell membrane. F(1)F(0) ATP synthase produces ATP from ADP in the presence of a proton or sodium gradient. F-type ATPases consist of two structural domains, F(1) containing the extramembraneous catalytic core and F(0) containing the membrane proton channel, linked together by a central stalk and a peripheral stalk. During catalysis, ATP synthesis in the catalytic domain of F(1) is coupled via a rotary mechanism of the central stalk subunits to proton translocation. Its function is as follows. This protein is part of the stalk that links CF(0) to CF(1). It either transmits conformational changes from CF(0) to CF(1) or is implicated in proton conduction. This Malacoplasma penetrans (strain HF-2) (Mycoplasma penetrans) protein is ATP synthase subunit delta.